The sequence spans 430 residues: GTPase Obg (430 aa).

In terms of domain architecture, Obg spans 1 to 158 (MFVDQVKISL…LDVSLELKLL (158 aa)). Residues 118–145 (KGGRGGRGNSRFATPRNPAPDFSEKGEP) are disordered. The OBG-type G domain occupies 159–329 (ADVGLVGFPS…LLYAIADKLE (171 aa)). GTP contacts are provided by residues 165–172 (GFPSVGKS), 190–194 (FTTIK), 212–215 (DLPG), 282–285 (NKMD), and 310–312 (STI). Residues Ser172 and Thr192 each coordinate Mg(2+). The region spanning 352 to 430 (KHTPSQDKFT…ILGGEFEFVE (79 aa)) is the OCT domain.

This sequence belongs to the TRAFAC class OBG-HflX-like GTPase superfamily. OBG GTPase family. In terms of assembly, monomer. Mg(2+) serves as cofactor.

Its subcellular location is the cytoplasm. Its function is as follows. An essential GTPase which binds GTP, GDP and possibly (p)ppGpp with moderate affinity, with high nucleotide exchange rates and a fairly low GTP hydrolysis rate. Plays a role in control of the cell cycle, stress response, ribosome biogenesis and in those bacteria that undergo differentiation, in morphogenesis control. This Staphylococcus aureus (strain COL) protein is GTPase Obg.